A 341-amino-acid chain; its full sequence is Barley B recombinant-like protein A (341 aa).

Over residues 48–62 (HQHQQHVPHHHHQPH) the composition is skewed to basic residues. Disordered regions lie at residues 48-95 (HQHQ…MNFA) and 150-234 (MQQQ…RKNI). Residues 68 to 77 (GANGNANGGA) show a composition bias toward low complexity. Pro residues predominate over residues 78-90 (MPPPPATEAPPSM). The span at 190-211 (PKKRQQGRQPKVPRAKKPKKSA) shows a compositional bias: basic residues.

The protein belongs to the BBR/BPC family.

It is found in the nucleus. Transcriptional regulator that specifically binds to GA-rich elements (GAGA-repeats) present in regulatory sequences of genes involved in developmental processes. The protein is Barley B recombinant-like protein A of Oryza sativa subsp. japonica (Rice).